Consider the following 270-residue polypeptide: Zinc finger protein ZAT2 (270 aa).

Composition is skewed to polar residues over residues 1–28 (MSNT…YNQN) and 36–48 (LTNN…SSSP). Residues 1–64 (MSNTSNSDPN…QPDPDASQIA (64 aa)) are disordered. The segment at 65–87 (RPCTECGKQFGSLKALFGHMRCH) adopts a C2H2-type 1 zinc-finger fold. Residues 95–119 (INPPSNFKRRINSNAASSSSSWDPS) form a disordered region. A compositionally biased stretch (low complexity) spans 106–115 (NSNAASSSSS). 2 C2H2-type zinc fingers span residues 148–170 (FECD…RATH) and 211–233 (HRCN…MRCH).

As to quaternary structure, interacts (via the EAR motif) with TPL. Expressed exclusively in pollen.

The protein localises to the nucleus. Mediates the regulation of male germ cell division by DUO1. In Arabidopsis thaliana (Mouse-ear cress), this protein is Zinc finger protein ZAT2.